Reading from the N-terminus, the 314-residue chain is Ribosomal protein L11 methyltransferase (314 aa).

Residues threonine 164, glycine 185, aspartate 207, and asparagine 249 each coordinate S-adenosyl-L-methionine.

This sequence belongs to the methyltransferase superfamily. PrmA family.

Its subcellular location is the cytoplasm. The enzyme catalyses L-lysyl-[protein] + 3 S-adenosyl-L-methionine = N(6),N(6),N(6)-trimethyl-L-lysyl-[protein] + 3 S-adenosyl-L-homocysteine + 3 H(+). In terms of biological role, methylates ribosomal protein L11. This Clostridium beijerinckii (strain ATCC 51743 / NCIMB 8052) (Clostridium acetobutylicum) protein is Ribosomal protein L11 methyltransferase.